The sequence spans 128 residues: Orchestin (128 aa).

The signal sequence occupies residues 1–20 (MNKVFIIGVCLFIVSQAVLA). The tract at residues 23 to 95 (WDSDESSDER…DEDSDDSQES (73 aa)) is disordered. Basic and acidic residues-rich tracts occupy residues 30 to 49 (DERLSDRSDESREEPRKLVV) and 56 to 81 (EDSNESAEVRRRDDSRESEEEPRKLS). Residues 84–93 (TSDEDSDDSQ) are compositionally biased toward acidic residues.

In terms of processing, phosphorylated on Ser and Tyr residues. Calcium-binding activity is dependent on serine phosphorylation but not on tyrosine phosphorylation. As to expression, posterior caeca epithelium of the gut.

The protein localises to the secreted. In terms of biological role, plays a role in cuticle calcification. May induce precipitation of the calcium stored in the posterior caeca as calcium carbonate. The sequence is that of Orchestin from Cryptorchestia cavimana (Amphipod).